The sequence spans 154 residues: Snaclec lebecin subunit beta (154 aa).

A signal peptide spans Met-1–Ala-23. 3 cysteine pairs are disulfide-bonded: Cys-25/Cys-36, Cys-53/Cys-150, and Cys-125/Cys-142. The C-type lectin domain occupies Asp-32–Lys-151. Asn-139 carries N-linked (GlcNAc...) asparagine glycosylation.

Heterodimer with the alpha subunit (AC W5XDM0); disulfide-linked. In terms of tissue distribution, expressed by the venom gland.

Its subcellular location is the secreted. In terms of biological role, inhibits human breast cancer cells (MDA-MB231) migration and proliferation, as well as their adhesion to fibrinogen and fibronectin. This inhibition may be due to the binding to receptors of the integrin family, probably alpha-v/beta-3 (ITGAV/ITGB3) (40% inhibition of cell adhesion) and alpha-5/beta-1 (ITGA5/ITGB1) (by comparison with lebectin). The polypeptide is Snaclec lebecin subunit beta (Macrovipera lebetinus (Levantine viper)).